The sequence spans 102 residues: Large ribosomal subunit protein bL21 (102 aa).

This sequence belongs to the bacterial ribosomal protein bL21 family. Part of the 50S ribosomal subunit. Contacts protein L20.

Functionally, this protein binds to 23S rRNA in the presence of protein L20. This chain is Large ribosomal subunit protein bL21, found in Ehrlichia ruminantium (strain Gardel).